Reading from the N-terminus, the 206-residue chain is Ribosomal RNA small subunit methyltransferase G (206 aa).

S-adenosyl-L-methionine-binding positions include Gly-71, Phe-76, 122–123 (AE), and Arg-135.

The protein belongs to the methyltransferase superfamily. RNA methyltransferase RsmG family.

It localises to the cytoplasm. Functionally, specifically methylates the N7 position of a guanine in 16S rRNA. In Bacteroides fragilis (strain ATCC 25285 / DSM 2151 / CCUG 4856 / JCM 11019 / LMG 10263 / NCTC 9343 / Onslow / VPI 2553 / EN-2), this protein is Ribosomal RNA small subunit methyltransferase G.